The sequence spans 552 residues: Probable protein kinase UbiB (552 aa).

Residues Leu-22–Pro-42 form a helical membrane-spanning segment. A Protein kinase domain is found at Ser-118–Arg-498. ATP contacts are provided by residues Leu-124–Val-132 and Lys-146. Catalysis depends on Asp-281, which acts as the Proton acceptor. 2 consecutive transmembrane segments (helical) span residues Ile-501–Ile-521 and Phe-530–Leu-550.

It belongs to the ABC1 family. UbiB subfamily.

The protein resides in the cell inner membrane. Its pathway is cofactor biosynthesis; ubiquinone biosynthesis [regulation]. Functionally, is probably a protein kinase regulator of UbiI activity which is involved in aerobic coenzyme Q (ubiquinone) biosynthesis. This is Probable protein kinase UbiB from Cellvibrio japonicus (strain Ueda107) (Pseudomonas fluorescens subsp. cellulosa).